The sequence spans 448 residues: Argininosuccinate synthase (448 aa).

ATP contacts are provided by residues 17–25 (AFSGGLDTS) and Ala-43. Position 99 (Tyr-99) interacts with L-citrulline. ATP is bound by residues Gly-129 and Thr-131. Positions 131, 135, and 136 each coordinate L-aspartate. Asn-135 lines the L-citrulline pocket. Asp-136 contributes to the ATP binding site. The L-citrulline site is built by Arg-139 and Ser-192. Asp-194 lines the ATP pocket. Residues Thr-201, Glu-203, and Glu-280 each coordinate L-citrulline.

It belongs to the argininosuccinate synthase family. Type 2 subfamily. As to quaternary structure, homotetramer.

Its subcellular location is the cytoplasm. The enzyme catalyses L-citrulline + L-aspartate + ATP = 2-(N(omega)-L-arginino)succinate + AMP + diphosphate + H(+). It participates in amino-acid biosynthesis; L-arginine biosynthesis; L-arginine from L-ornithine and carbamoyl phosphate: step 2/3. This is Argininosuccinate synthase from Bradyrhizobium sp. (strain ORS 278).